A 118-amino-acid polypeptide reads, in one-letter code: UPF0344 protein RBAM_010920 (118 aa).

Transmembrane regions (helical) follow at residues 4-24 (WHIT…GLYG), 33-53 (ITHM…AELF), 62-82 (EYAG…MLVI), and 93-113 (LWIG…HLPI).

It belongs to the UPF0344 family.

The protein resides in the cell membrane. The sequence is that of UPF0344 protein RBAM_010920 from Bacillus velezensis (strain DSM 23117 / BGSC 10A6 / LMG 26770 / FZB42) (Bacillus amyloliquefaciens subsp. plantarum).